The chain runs to 59 residues: MSKVILLCLIFALFACSISALSKNKNCLKLGQKCNFEKKRCCTGLNCYISQNKCLPVKL.

A signal peptide spans 1–19; it reads MSKVILLCLIFALFACSIS.

This sequence belongs to the limacoditoxin-3 family. In terms of processing, the natural peptide is not amidated. The recombinant peptide is amidated. Expressed by the venom secretory cell of the spine. The spine is a cuticular structure containing a single large nucleated venom-secreting cell at its base. It is an independent unit capable of producing, storing and injecting venom. On the back of D.vulnerans caterpillars, spines are grouped together by 50 to 100 to form scoli, of which there are eight in D.vulnerans.

It is found in the secreted. Its function is as follows. Probable toxin. Shows a relatively potent antiparasitic activity against the major pathogenic nematode of ruminants (H.contortus, EC(50)=2.6 uM). Does not show insecticidal and antimicrobial activities. Does not induce increase in intracellular calcium in mouse DRG neurons, suggesting that it does not induce pain. The sequence is that of U-limacoditoxin(3)-Dv33 from Doratifera vulnerans (Mottled cup moth).